Reading from the N-terminus, the 119-residue chain is Methylglyoxal synthase (119 aa).

The MGS-like domain occupies 1–119 (MKIALIAHDK…KTAELIIKQF (119 aa)). Residues His-8, Lys-12, 34–37 (TGTT), and 54–55 (SG) each bind substrate. The Proton donor/acceptor role is filled by Asp-60. His-87 is a binding site for substrate.

The protein belongs to the methylglyoxal synthase family.

It carries out the reaction dihydroxyacetone phosphate = methylglyoxal + phosphate. In terms of biological role, catalyzes the formation of methylglyoxal from dihydroxyacetone phosphate. The chain is Methylglyoxal synthase from Clostridium beijerinckii (strain ATCC 51743 / NCIMB 8052) (Clostridium acetobutylicum).